A 514-amino-acid chain; its full sequence is Na(+)/H(+) antiporter NhaB (514 aa).

The next 11 helical transmembrane spans lie at 13 to 33, 34 to 54, 96 to 116, 136 to 156, 203 to 223, 236 to 256, 304 to 324, 349 to 369, 392 to 412, 448 to 468, and 479 to 499; these read FMGN…IINP, LIFF…EFIF, VILL…LLLF, CFAS…AVVI, LMMH…VGEP, FVTF…AGLA, ALIG…VGII, EEAL…AVII, LFYL…VGTV, ATPN…SPLI, and ALPY…FWLV.

Belongs to the NhaB Na(+)/H(+) (TC 2.A.34) antiporter family.

The protein localises to the cell inner membrane. It catalyses the reaction 2 Na(+)(in) + 3 H(+)(out) = 2 Na(+)(out) + 3 H(+)(in). Functionally, na(+)/H(+) antiporter that extrudes sodium in exchange for external protons. The sequence is that of Na(+)/H(+) antiporter NhaB from Proteus mirabilis (strain HI4320).